The sequence spans 161 residues: 3-hydroxyacyl-[acyl-carrier-protein] dehydratase FabZ (161 aa).

His-66 is an active-site residue.

Belongs to the thioester dehydratase family. FabZ subfamily.

Its subcellular location is the cytoplasm. It carries out the reaction a (3R)-hydroxyacyl-[ACP] = a (2E)-enoyl-[ACP] + H2O. Its function is as follows. Involved in unsaturated fatty acids biosynthesis. Catalyzes the dehydration of short chain beta-hydroxyacyl-ACPs and long chain saturated and unsaturated beta-hydroxyacyl-ACPs. This chain is 3-hydroxyacyl-[acyl-carrier-protein] dehydratase FabZ, found in Gluconacetobacter diazotrophicus (strain ATCC 49037 / DSM 5601 / CCUG 37298 / CIP 103539 / LMG 7603 / PAl5).